We begin with the raw amino-acid sequence, 128 residues long: Nanos homolog 1 (128 aa).

An essential for its translational repressor activity region spans residues 7–23 (FDSWSDYLGLSSLISRG). The disordered stretch occupies residues 23-56 (GLQPRGEGENPSPRWNVSCPAPAEPLPSKEPEGR). Residues 60–114 (GCGFCRSNKEAMSLYSSHRLRSLDGRVLCPVLRGYTCPLCGANGDWAHTMRYCPL) form a Nanos-type zinc finger. 8 residues coordinate Zn(2+): C61, C64, H77, C88, C96, C99, H107, and C112. Short sequence motifs (C2HC) lie at residues 61–88 (CGFC…RVLC) and 96–112 (CPLC…MRYC).

This sequence belongs to the nanos family. Interacts with ccnb1.

Its subcellular location is the cytoplasm. The protein resides in the perinuclear region. Its function is as follows. Acts as a translational repressor. Can mediate repression affecting different steps in the translation process: cap-driven, IRES-driven, polyadenylated RNAs or nonpolyadenylated RNAs. Essential for the development of primordial germ cells (PGCs) by ensuring their proper migration and survival. The protein is Nanos homolog 1 (nanos1) of Xenopus borealis (Kenyan clawed frog).